Reading from the N-terminus, the 295-residue chain is Ankyrin repeat and SOCS box protein 17 (295 aa).

Residues 146-176 (SGITPLLYVAQTRQSNILKILLQYGILEREK) form an ANK repeat. The SOCS box domain occupies 232 to 295 (LGRRPIISNW…RLQKYLNLES (64 aa)).

The protein belongs to the ankyrin SOCS box (ASB) family.

It functions in the pathway protein modification; protein ubiquitination. Functionally, may be a substrate-recognition component of a SCF-like ECS (Elongin-Cullin-SOCS-box protein) E3 ubiquitin-protein ligase complex which mediates the ubiquitination and subsequent proteasomal degradation of target proteins. This Canis lupus familiaris (Dog) protein is Ankyrin repeat and SOCS box protein 17 (ASB17).